The chain runs to 291 residues: Popeye domain-containing protein 3 (291 aa).

Asn-4 carries N-linked (GlcNAc...) asparagine glycosylation. Helical transmembrane passes span 27-44 (GAIY…FMGG), 48-70 (FGLL…WAWV), and 77-99 (IFSW…AYQV).

Belongs to the popeye family. Expressed predominantly in skeletal muscle (at protein level). Also detected in heart.

It localises to the membrane. Functionally, may play a role in the maintenance of heart function mediated, at least in part, through cAMP-binding. May play a role in the regulation of KCNK2/TREK-1-mediated current amplitude. This Homo sapiens (Human) protein is Popeye domain-containing protein 3 (POPDC3).